We begin with the raw amino-acid sequence, 670 residues long: Leucine-rich repeat-containing protein 45 (670 aa).

LRR repeat units follow at residues threonine 58 to arginine 80, valine 87 to glycine 107, serine 115 to phenylalanine 136, alanine 145 to leucine 166, threonine 173 to asparagine 194, and threonine 201 to isoleucine 212. Residues arginine 252–glutamine 645 are a coiled coil. Serine 661 carries the post-translational modification Phosphoserine; by NEK2.

In terms of assembly, homomer. Interacts with CROCC/rootletin and CEP250. Interacts with CEP44. Interacts with CCDC102B (via N-terminus). Phosphorylated by NEK2 during misosis, phosphorylation reduces centrosomal localization which subsequently leads to centrosome separation.

It is found in the cytoplasm. Its subcellular location is the cytoskeleton. The protein resides in the microtubule organizing center. It localises to the centrosome. In terms of biological role, component of the proteinaceous fiber-like linker between two centrioles, required for centrosome cohesion. This is Leucine-rich repeat-containing protein 45 (LRRC45) from Homo sapiens (Human).